Consider the following 1301-residue polypeptide: DNA-directed RNA polymerase subunit beta (1301 aa).

This sequence belongs to the RNA polymerase beta chain family. As to quaternary structure, in plastids the minimal PEP RNA polymerase catalytic core is composed of four subunits: alpha, beta, beta', and beta''. When a (nuclear-encoded) sigma factor is associated with the core the holoenzyme is formed, which can initiate transcription.

The protein localises to the plastid. Its subcellular location is the chloroplast. The enzyme catalyses RNA(n) + a ribonucleoside 5'-triphosphate = RNA(n+1) + diphosphate. In terms of biological role, DNA-dependent RNA polymerase catalyzes the transcription of DNA into RNA using the four ribonucleoside triphosphates as substrates. In Chlorella vulgaris (Green alga), this protein is DNA-directed RNA polymerase subunit beta.